Reading from the N-terminus, the 209-residue chain is Uracil phosphoribosyltransferase (209 aa).

5-phospho-alpha-D-ribose 1-diphosphate-binding positions include arginine 79, arginine 104, and 131-139; that span reads DPMLATGGS. Residues valine 194 and 199–201 each bind uracil; that span reads GDA. Aspartate 200 provides a ligand contact to 5-phospho-alpha-D-ribose 1-diphosphate.

The protein belongs to the UPRTase family. Requires Mg(2+) as cofactor.

It carries out the reaction UMP + diphosphate = 5-phospho-alpha-D-ribose 1-diphosphate + uracil. Its pathway is pyrimidine metabolism; UMP biosynthesis via salvage pathway; UMP from uracil: step 1/1. Its activity is regulated as follows. Allosterically activated by GTP. Catalyzes the conversion of uracil and 5-phospho-alpha-D-ribose 1-diphosphate (PRPP) to UMP and diphosphate. This is Uracil phosphoribosyltransferase from Bacillus mycoides (strain KBAB4) (Bacillus weihenstephanensis).